The primary structure comprises 563 residues: Alpha-keto-acid decarboxylase (563 aa).

Residue Glu59 coordinates thiamine diphosphate. A disordered region spans residues 347–367 (SSPPVASPPAEPLPPPPPREQ). The segment covering 351–366 (VASPPAEPLPPPPPRE) has biased composition (pro residues). Residues 394-476 (TSFYGMADHR…VVVNNDGYTV (83 aa)) are thiamine pyrophosphate binding. Asp444, Asn471, and Gly473 together coordinate Mg(2+).

The protein belongs to the TPP enzyme family. Requires a metal cation as cofactor. It depends on thiamine diphosphate as a cofactor.

Its function is as follows. Decarboxylates branched-chain and aromatic alpha-keto acids to aldehydes. In Mycolicibacterium paratuberculosis (strain ATCC BAA-968 / K-10) (Mycobacterium paratuberculosis), this protein is Alpha-keto-acid decarboxylase (kdc).